Reading from the N-terminus, the 217-residue chain is Superoxide dismutase [Mn], mitochondrial (217 aa).

Residues 1 to 17 constitute a mitochondrion transit peptide; it reads MFVARKISPNCKPGVRG. Mn(2+) contacts are provided by H43, H91, D175, and H179.

It belongs to the iron/manganese superoxide dismutase family. Homotetramer. Mn(2+) is required as a cofactor.

Its subcellular location is the mitochondrion matrix. The enzyme catalyses 2 superoxide + 2 H(+) = H2O2 + O2. Functionally, destroys superoxide anion radicals which are normally produced within the cells and which are toxic to biological systems. This is Superoxide dismutase [Mn], mitochondrial (Sod2) from Drosophila melanogaster (Fruit fly).